Reading from the N-terminus, the 574-residue chain is MARHLITSALPYINGIKHLGNMVGSMLPADVYSRYLRQRGHDVLYICATDEHGTPAELAAKERGLPVDEFCAQAHDAQKAVYDGFELAFDYFGRSSSEQNREITQHFARRLNENGFIEERAIRQVYSPADGRFLPDRYVEGTCPHCGYDKARGDQCENCTRVLDPTDLINPRSAISGSTDLEVRETKHLFLLQSKLQHEVEEWVARHEEEWPQLASSIARKWLNEGLHDRAITRDLDWGVPVPADTWPELAAEGKVFYVWFDAPIEYIGATKEWSDLDPENRDWKSWWYDADSGENPVRYTEFMAKDNVPFHTVMFPATELGVREPWKKVDYVKAFNWLTYYGGKFSTSQKRGVFTDHALEILPADYWRYFLIANAPESDDSSFTWEHFTATVNKDLADTLGNFVNRVLSFSKKRFGEEVPAGAPAGESETKLGEEIAALLAEYESHMETLQFRKAAAALRALWSAGNSYLEEKAPWLEIKTNPEGAALTLRTAMNLIHLYSVVSEPFIPASSKAMRSAFALSEDTATWVTQDEAKSLDSVPAGTPFTVPPVLFAKITDEDLESYKERFGGAPE.

A 'HIGH' region motif is present at residues 11-21; that stretch reads PYINGIKHLGN. The Zn(2+) site is built by C143, C146, C156, and C159. Residues 345 to 349 carry the 'KMSKS' region motif; it reads KFSTS. T348 serves as a coordination point for ATP.

The protein belongs to the class-I aminoacyl-tRNA synthetase family. MetG type 1 subfamily. As to quaternary structure, monomer. Requires Zn(2+) as cofactor.

The protein resides in the cytoplasm. It catalyses the reaction tRNA(Met) + L-methionine + ATP = L-methionyl-tRNA(Met) + AMP + diphosphate. In terms of biological role, is required not only for elongation of protein synthesis but also for the initiation of all mRNA translation through initiator tRNA(fMet) aminoacylation. The chain is Methionine--tRNA ligase from Streptomyces avermitilis (strain ATCC 31267 / DSM 46492 / JCM 5070 / NBRC 14893 / NCIMB 12804 / NRRL 8165 / MA-4680).